A 248-amino-acid polypeptide reads, in one-letter code: Probable transcriptional regulatory protein RPC_4807 (248 aa).

A disordered region spans residues 1–21 (MAGHSQFKNIMHRKGRQDAQK).

It belongs to the TACO1 family.

It localises to the cytoplasm. In Rhodopseudomonas palustris (strain BisB18), this protein is Probable transcriptional regulatory protein RPC_4807.